Reading from the N-terminus, the 179-residue chain is NAD(P)H-quinone oxidoreductase subunit J (179 aa).

This sequence belongs to the complex I 30 kDa subunit family. In terms of assembly, NDH-1 can be composed of about 15 different subunits; different subcomplexes with different compositions have been identified which probably have different functions. In terms of processing, in at one experiment the initiator methionine has been seen to be kept and removed.

It localises to the cellular thylakoid membrane. It carries out the reaction a plastoquinone + NADH + (n+1) H(+)(in) = a plastoquinol + NAD(+) + n H(+)(out). It catalyses the reaction a plastoquinone + NADPH + (n+1) H(+)(in) = a plastoquinol + NADP(+) + n H(+)(out). NDH-1 shuttles electrons from an unknown electron donor, via FMN and iron-sulfur (Fe-S) centers, to quinones in the respiratory and/or the photosynthetic chain. The immediate electron acceptor for the enzyme in this species is believed to be plastoquinone. Couples the redox reaction to proton translocation, and thus conserves the redox energy in a proton gradient. Cyanobacterial NDH-1 also plays a role in inorganic carbon-concentration. The chain is NAD(P)H-quinone oxidoreductase subunit J from Synechocystis sp. (strain ATCC 27184 / PCC 6803 / Kazusa).